A 50-amino-acid chain; its full sequence is Large ribosomal subunit protein bL33 (50 aa).

This sequence belongs to the bacterial ribosomal protein bL33 family.

In Fusobacterium nucleatum subsp. nucleatum (strain ATCC 25586 / DSM 15643 / BCRC 10681 / CIP 101130 / JCM 8532 / KCTC 2640 / LMG 13131 / VPI 4355), this protein is Large ribosomal subunit protein bL33.